A 550-amino-acid polypeptide reads, in one-letter code: Methyl-coenzyme M reductase I subunit alpha (550 aa).

Gln-147 serves as a coordination point for coenzyme F430. Residues Arg-225, Lys-256 to His-257, and Arg-270 each bind coenzyme B. At His-257 the chain carries Pros-methylhistidine. The residue at position 271 (Arg-271) is a 5-methylarginine. A coenzyme M-binding site is contributed by Tyr-333. At Gln-400 the chain carries 2-methylglutamine. Residue Tyr-444 coordinates coenzyme M. Gly-445 is subject to 1-thioglycine. The residue at position 450 (Asp-450) is a (Z)-2,3-didehydroaspartate. Position 452 is an S-methylcysteine (Cys-452).

The protein belongs to the methyl-coenzyme M reductase alpha subunit family. MCR is a hexamer of two alpha, two beta, and two gamma chains, forming a dimer of heterotrimers. Requires coenzyme F430 as cofactor. In terms of processing, the alpha subunit contains six modified amino acids near the active site region. Is methylated on His-257, Arg-271, Gln-400 and Cys-452, probably by the action of specific S-adenosylmethionine-dependent methyltransferases. Also contains a thioglycine at position 445, forming a thiopeptide bond. Contains a didehydroaspartate residue at position 450. The methylation on C5 of Arg-271 is a post-translational methylation not essential in vivo, but which plays a role for the stability and structural integrity of MCR.

Its subcellular location is the cytoplasm. The enzyme catalyses coenzyme B + methyl-coenzyme M = methane + coenzyme M-coenzyme B heterodisulfide. It participates in one-carbon metabolism; methyl-coenzyme M reduction; methane from methyl-coenzyme M: step 1/1. Methyl-coenzyme M reductase activity is inhibited by 3-nitrooxypropanol (3-NOP) in vitro and in vivo, by oxidation of its active site Ni(I), which stops both growth and methanogenesis. Is also inhibited by the reaction product CoM-S-S-CoB. Functionally, component of the methyl-coenzyme M reductase (MCR) I that catalyzes the reductive cleavage of methyl-coenzyme M (CoM-S-CH3 or 2-(methylthio)ethanesulfonate) using coenzyme B (CoB or 7-mercaptoheptanoylthreonine phosphate) as reductant which results in the production of methane and the mixed heterodisulfide of CoB and CoM (CoM-S-S-CoB). This is the final step in methanogenesis. Neither N-6-mercaptohexanoylthreonine phosphate (H-S-HxoTP) nor N-8-mercaptooctanoylthreonine phosphate (H-SOcoTP) nor any other thiol compound such as CoA or CoM can substitute for CoB as the electron donor. This is Methyl-coenzyme M reductase I subunit alpha (mcrA) from Methanothermobacter marburgensis (strain ATCC BAA-927 / DSM 2133 / JCM 14651 / NBRC 100331 / OCM 82 / Marburg) (Methanobacterium thermoautotrophicum).